The primary structure comprises 29 residues: Orphan peptide CllNtx (29 aa).

In terms of processing, contains 3 disulfide bonds. Expressed by the venom gland.

The protein resides in the secreted. Its function is as follows. May act as a toxin. This chain is Orphan peptide CllNtx, found in Centruroides limpidus (Mexican scorpion).